The sequence spans 429 residues: Adenylosuccinate synthetase (429 aa).

GTP contacts are provided by residues 12–18 (GDEGKGK) and 40–42 (GHT). Asp-13 (proton acceptor) is an active-site residue. Residues Asp-13 and Gly-40 each contribute to the Mg(2+) site. Residues 13 to 16 (DEGK), 38 to 41 (NAGH), Thr-128, Arg-142, Gln-223, Thr-238, and Arg-302 each bind IMP. The active-site Proton donor is His-41. Residue 298 to 304 (TTTGRPR) participates in substrate binding. GTP-binding positions include Arg-304, 330-332 (CID), and 412-414 (SVG).

This sequence belongs to the adenylosuccinate synthetase family. In terms of assembly, homodimer. Mg(2+) serves as cofactor.

It localises to the cytoplasm. The enzyme catalyses IMP + L-aspartate + GTP = N(6)-(1,2-dicarboxyethyl)-AMP + GDP + phosphate + 2 H(+). It functions in the pathway purine metabolism; AMP biosynthesis via de novo pathway; AMP from IMP: step 1/2. In terms of biological role, plays an important role in the de novo pathway of purine nucleotide biosynthesis. Catalyzes the first committed step in the biosynthesis of AMP from IMP. In Streptococcus mutans serotype c (strain ATCC 700610 / UA159), this protein is Adenylosuccinate synthetase.